A 289-amino-acid chain; its full sequence is Protoheme IX farnesyltransferase (289 aa).

9 helical membrane-spanning segments follow: residues Val9 to Met29, Leu40 to Cys60, Leu89 to Trp109, Pro110 to Leu130, Thr134 to Ser154, Ala155 to Thr175, Tyr190 to Arg209, Val228 to Val248, and Phe269 to Val289.

Belongs to the UbiA prenyltransferase family. Protoheme IX farnesyltransferase subfamily.

It localises to the cell membrane. It catalyses the reaction heme b + (2E,6E)-farnesyl diphosphate + H2O = Fe(II)-heme o + diphosphate. It participates in porphyrin-containing compound metabolism; heme O biosynthesis; heme O from protoheme: step 1/1. Functionally, converts heme B (protoheme IX) to heme O by substitution of the vinyl group on carbon 2 of heme B porphyrin ring with a hydroxyethyl farnesyl side group. The protein is Protoheme IX farnesyltransferase of Frankia casuarinae (strain DSM 45818 / CECT 9043 / HFP020203 / CcI3).